The primary structure comprises 915 residues: Pentatricopeptide repeat-containing protein At5g65560 (915 aa).

PPR repeat units lie at residues 182-216, 217-251, 252-286, 287-321, 322-356, 357-391, 392-426, 427-460, 461-495, 496-530, 531-565, 566-600, 601-635, 636-670, 671-705, 724-758, 759-794, 795-829, 830-864, and 865-899; these read IIGCYNTLLNSLARFGLVDEMKQVYMEMLEDKVCP, NIYTYNKMVNGYCKLGNVEEANQYVSKIVEAGLDP, DFFTYTSLIMGYCQRKDLDSAFKVFNEMPLKGCRR, NEVAYTHLIHGLCVARRIDEAMDLFVKMKDDECFP, TVRTYTVLIKSLCGSERKSEALNLVKEMEETGIKP, NIHTYTVLIDSLCSQCKFEKARELLGQMLEKGLMP, NVITYNALINGYCKRGMIEDAVDVVELMESRKLSP, NTRTYNELIKGYCKSNVHKAMGVLNKMLERKVLP, DVVTYNSLIDGQCRSGNFDSAYRLLSLMNDRGLVP, DQWTYTSMIDSLCKSKRVEEACDLFDSLEQKGVNP, NVVMYTALIDGYCKAGKVDEAHLMLEKMLSKNCLP, NSLTFNALIHGLCADGKLKEATLLEEKMVKIGLQP, TVSTDTILIHRLLKDGDFDHAYSRFQQMLSSGTKP, DAHTYTTFIQTYCREGRLLDAEDMMAKMRENGVSP, DLFTYSSLIKGYGDLGQTNFAFDVLKRMRDTGCEP, KQKGSEPELCAMSNMMEFDTVVELLEKMVEHSVTP, NAKSYEKLILGICEVGNLRVAEKVFDHMQRNEGISP, SELVFNALLSCCCKLKKHNEAAKVVDDMICVGHLP, QLESCKVLICGLYKKGEKERGTSVFQNLLQCGYYE, and DELAWKIIIDGVGKQGLVEAFYELFNVMEKNGCKF.

It belongs to the PPR family. P subfamily.

The chain is Pentatricopeptide repeat-containing protein At5g65560 from Arabidopsis thaliana (Mouse-ear cress).